Reading from the N-terminus, the 180-residue chain is Translation initiation factor IF-3 (180 aa).

It belongs to the IF-3 family. In terms of assembly, monomer.

Its subcellular location is the cytoplasm. IF-3 binds to the 30S ribosomal subunit and shifts the equilibrium between 70S ribosomes and their 50S and 30S subunits in favor of the free subunits, thus enhancing the availability of 30S subunits on which protein synthesis initiation begins. This is Translation initiation factor IF-3 from Salmonella paratyphi A (strain ATCC 9150 / SARB42).